We begin with the raw amino-acid sequence, 308 residues long: Membrane protein insertase YidC 1 (308 aa).

A signal peptide spans 1–22; that stretch reads MKSIKRFALSAMGVAMLLVLTG. Residue Cys-23 is the site of N-palmitoyl cysteine attachment. Cys-23 carries the S-diacylglycerol cysteine lipid modification. 5 helical membrane passes run 60 to 80, 135 to 155, 168 to 188, 211 to 226, and 232 to 252; these read FGVAIIIVTIIVRLIILPLGI, FGGVGCFPILLQMPFFSAIYF, YLGIPLGSPSMILVACAGVLY, MIYMSPLMIVVFSLFS, and LYWVVGGFMMILQQFIVNYIV. The interval 263–308 is disordered; it reads ELAKNPPKASAFSKPSGRKDVTPEQPTAITSKKKHKNRNAGKQRSR. Residues 293–308 are compositionally biased toward basic residues; the sequence is SKKKHKNRNAGKQRSR.

The protein belongs to the OXA1/ALB3/YidC family. Type 2 subfamily.

Its subcellular location is the cell membrane. Its function is as follows. Required for the insertion and/or proper folding and/or complex formation of integral membrane proteins into the membrane. Involved in integration of membrane proteins that insert both dependently and independently of the Sec translocase complex, as well as at least some lipoproteins. This chain is Membrane protein insertase YidC 1, found in Streptococcus pneumoniae serotype 4 (strain ATCC BAA-334 / TIGR4).